The following is a 505-amino-acid chain: Flagellin (505 aa).

Belongs to the bacterial flagellin family.

The protein localises to the secreted. It localises to the bacterial flagellum. Flagellin is the subunit protein which polymerizes to form the filaments of bacterial flagella. The chain is Flagellin (fliC) from Salmonella dublin.